Reading from the N-terminus, the 308-residue chain is Cytochrome b (308 aa).

Transmembrane regions (helical) follow at residues 1-21 (FGSL…LLAM), 45-66 (WLIR…YLHI), 81-101 (WNIG…GYVL), and 146-166 (FFAL…IHLT). Heme b is bound by residues His-51 and His-65. The heme b site is built by His-150 and His-164. Position 169 (His-169) interacts with a ubiquinone. The next 3 helical transmembrane spans lie at 194–214 (TKDA…AMFS), 256–276 (LGGV…PLLH), and 288–308 (LSQF…WIGS).

The protein belongs to the cytochrome b family. The cytochrome bc1 complex contains 11 subunits: 3 respiratory subunits (MT-CYB, CYC1 and UQCRFS1), 2 core proteins (UQCRC1 and UQCRC2) and 6 low-molecular weight proteins (UQCRH/QCR6, UQCRB/QCR7, UQCRQ/QCR8, UQCR10/QCR9, UQCR11/QCR10 and a cleavage product of UQCRFS1). This cytochrome bc1 complex then forms a dimer. It depends on heme b as a cofactor.

It localises to the mitochondrion inner membrane. Its function is as follows. Component of the ubiquinol-cytochrome c reductase complex (complex III or cytochrome b-c1 complex) that is part of the mitochondrial respiratory chain. The b-c1 complex mediates electron transfer from ubiquinol to cytochrome c. Contributes to the generation of a proton gradient across the mitochondrial membrane that is then used for ATP synthesis. This chain is Cytochrome b (MT-CYB), found in Zaratornis stresemanni (White-cheeked cotinga).